The sequence spans 478 residues: Puromycin-sensitive aminopeptidase-like protein (478 aa).

Substrate-binding positions include Glu-180 and 316 to 320; that span reads GAMEN. His-352 lines the Zn(2+) pocket. Glu-353 serves as the catalytic Proton acceptor. Residues His-356 and Glu-375 each contribute to the Zn(2+) site.

It belongs to the peptidase M1 family. Zn(2+) serves as cofactor.

Functionally, aminopeptidase with broad substrate specificity to several peptides. The polypeptide is Puromycin-sensitive aminopeptidase-like protein (NPEPPSL1) (Homo sapiens (Human)).